The sequence spans 223 residues: UPF0502 protein Sde_2426 (223 aa).

It belongs to the UPF0502 family.

In Saccharophagus degradans (strain 2-40 / ATCC 43961 / DSM 17024), this protein is UPF0502 protein Sde_2426.